The chain runs to 177 residues: Secretion monitor (177 aa).

Positions 1–37 (MIGILNRWRQFGRRYFWPHLLLGMVAASLGVPLNLSG) are cleaved as a signal peptide.

Belongs to the SecM family.

The protein resides in the cytoplasm. It is found in the cytosol. The protein localises to the periplasm. Functionally, regulates secA expression by translational coupling of the secM secA operon. Translational pausing at a specific Pro residue 5 residues before the end of the protein may allow disruption of a mRNA repressor helix that normally suppresses secA translation initiation. The chain is Secretion monitor from Yersinia pestis bv. Antiqua (strain Antiqua).